A 332-amino-acid chain; its full sequence is Fructose-1,6-bisphosphatase class 1 (332 aa).

Residues glutamate 89, aspartate 110, leucine 112, and aspartate 113 each coordinate Mg(2+). Substrate is bound by residues 113–116, asparagine 206, tyrosine 239, 257–259, and lysine 269; these read DGSS and YLY. Residue glutamate 275 participates in Mg(2+) binding.

The protein belongs to the FBPase class 1 family. As to quaternary structure, homotetramer. The cofactor is Mg(2+).

The protein resides in the cytoplasm. It carries out the reaction beta-D-fructose 1,6-bisphosphate + H2O = beta-D-fructose 6-phosphate + phosphate. It participates in carbohydrate biosynthesis; gluconeogenesis. In Salmonella typhimurium (strain LT2 / SGSC1412 / ATCC 700720), this protein is Fructose-1,6-bisphosphatase class 1.